A 967-amino-acid chain; its full sequence is Serine/threonine-protein kinase/endoribonuclease ire-1 (967 aa).

Positions 1–21 (MRATFHLFTFIFLLLFSSVIC) are cleaved as a signal peptide. Residues 22-438 (ISTPGFRNDH…LLLLNNHPIP (417 aa)) lie on the Lumenal side of the membrane. 2 N-linked (GlcNAc...) asparagine glycosylation sites follow: Asn100 and Asn188. A helical membrane pass occupies residues 439–455 (FYATLVTMFALLLTVIW). The Cytoplasmic segment spans residues 456 to 967 (QCGRQWDQQK…IKKKSNPNTD (512 aa)). The segment at 474–494 (EIVNNPGESRSAQTSKQSNRG) is disordered. Residues 479-494 (PGESRSAQTSKQSNRG) show a composition bias toward polar residues. One can recognise a Protein kinase domain in the interval 518 to 778 (YSPSDILGTG…ADAVLNHPFF (261 aa)). ATP contacts are provided by residues 524 to 532 (LGTGCEGTV) and Lys546. Asp636 serves as the catalytic Proton acceptor. At Ser672 the chain carries Phosphoserine; by autocatalysis. A KEN domain is found at 781-909 (SEKRLAYFSD…EAVFKRYYSD (129 aa)). Residues 948 to 967 (RTPLKLDKRNIKKKSNPNTD) form a disordered region. The span at 957 to 967 (NIKKKSNPNTD) shows a compositional bias: basic residues.

Belongs to the protein kinase superfamily. Ser/Thr protein kinase family. The cofactor is Mg(2+). In terms of processing, autophosphorylated mainly on serine residues.

Its subcellular location is the endoplasmic reticulum membrane. It catalyses the reaction L-seryl-[protein] + ATP = O-phospho-L-seryl-[protein] + ADP + H(+). The catalysed reaction is L-threonyl-[protein] + ATP = O-phospho-L-threonyl-[protein] + ADP + H(+). Its activity is regulated as follows. The kinase domain is activated by trans-autophosphorylation. Kinase activity is required for activation of the endoribonuclease domain. Functionally, senses unfolded proteins in the lumen of the endoplasmic reticulum via its N-terminal domain which leads to enzyme auto-activation. The active endoribonuclease domain splices xbp-1 precursor mRNA to produce the mature form which then induces transcription of UPR target genes. Unfolded protein response (UPR) transcriptional activation by ire-1, as well as translational attenuation by pek-1 in a complementary pathway, maintains ER homeostasis. Regulates the transcriptional up-regulation of nucleoside-diphosphatase apy-1 and many other genes, upon ER stress. By activating the UPR pathway during non-lethal hypoxia pre-conditioning, confers adaptive protection to subsequent exposure to hypoxia. ire-1 and pek-1 are redundant genes that control a pathway essential for larval development and survival. Plays a role in the nuclear retention of unspliced mRNAs. In Caenorhabditis elegans, this protein is Serine/threonine-protein kinase/endoribonuclease ire-1.